A 417-amino-acid chain; its full sequence is Histidine biosynthesis bifunctional protein his7 (417 aa).

The interval G225–Q299 is phosphoribosyl-AMP cyclohydrolase. A phosphoribosyl-ATP pyrophosphohydrolase region spans residues L303–R387.

It is found in the cytoplasm. It carries out the reaction 1-(5-phospho-beta-D-ribosyl)-5'-AMP + H2O = 1-(5-phospho-beta-D-ribosyl)-5-[(5-phospho-beta-D-ribosylamino)methylideneamino]imidazole-4-carboxamide. It catalyses the reaction 1-(5-phospho-beta-D-ribosyl)-ATP + H2O = 1-(5-phospho-beta-D-ribosyl)-5'-AMP + diphosphate + H(+). It functions in the pathway amino-acid biosynthesis; L-histidine biosynthesis; L-histidine from 5-phospho-alpha-D-ribose 1-diphosphate: step 2/9. It participates in amino-acid biosynthesis; L-histidine biosynthesis; L-histidine from 5-phospho-alpha-D-ribose 1-diphosphate: step 3/9. The chain is Histidine biosynthesis bifunctional protein his7 from Schizosaccharomyces pombe (strain 972 / ATCC 24843) (Fission yeast).